The following is a 129-amino-acid chain: Small ribosomal subunit protein eS6 (129 aa).

A disordered region spans residues 106–129 (QINASIVSRGEQSIDDLLGGEDDE).

The protein belongs to the eukaryotic ribosomal protein eS6 family.

The protein is Small ribosomal subunit protein eS6 of Natronomonas pharaonis (strain ATCC 35678 / DSM 2160 / CIP 103997 / JCM 8858 / NBRC 14720 / NCIMB 2260 / Gabara) (Halobacterium pharaonis).